A 355-amino-acid chain; its full sequence is MGGKTFMLMAGGTGGHIFPALAVADSLRARGHHVIWLGSKDSMEERIVPQYGIRLETLAIKGVRGNGIKRKLMLPVTLYQTVREAQRIIRKHRVECVIGFGGFVTFPGGLAAKLLGVPIVIHEQNAVAGLSNRHLSRWAKRVLYAFPKAFSHEGGLVGNPVRADISNLPVPAERFQGREGRLKILVVGGSLGADVLNKTVPQALALLPDDARPQMYHQSGRGKLGSLQADYDALGVKAECVEFITDMVSAYRDADLVICRAGALTIAELTAAGLGALLVPYPHAVDDHQTANARFMVQAEAGLLLPQTQLTAEKLAEILGSLNREKCLKWAENARTLALPHSADDVAEAAIACAA.

UDP-N-acetyl-alpha-D-glucosamine contacts are provided by residues 13–15, Asn-125, Arg-162, Ser-190, Ile-244, and Gln-289; that span reads TGG.

It belongs to the glycosyltransferase 28 family. MurG subfamily.

The protein localises to the cell inner membrane. It catalyses the reaction di-trans,octa-cis-undecaprenyl diphospho-N-acetyl-alpha-D-muramoyl-L-alanyl-D-glutamyl-meso-2,6-diaminopimeloyl-D-alanyl-D-alanine + UDP-N-acetyl-alpha-D-glucosamine = di-trans,octa-cis-undecaprenyl diphospho-[N-acetyl-alpha-D-glucosaminyl-(1-&gt;4)]-N-acetyl-alpha-D-muramoyl-L-alanyl-D-glutamyl-meso-2,6-diaminopimeloyl-D-alanyl-D-alanine + UDP + H(+). The protein operates within cell wall biogenesis; peptidoglycan biosynthesis. Cell wall formation. Catalyzes the transfer of a GlcNAc subunit on undecaprenyl-pyrophosphoryl-MurNAc-pentapeptide (lipid intermediate I) to form undecaprenyl-pyrophosphoryl-MurNAc-(pentapeptide)GlcNAc (lipid intermediate II). The protein is UDP-N-acetylglucosamine--N-acetylmuramyl-(pentapeptide) pyrophosphoryl-undecaprenol N-acetylglucosamine transferase of Neisseria meningitidis serogroup C / serotype 2a (strain ATCC 700532 / DSM 15464 / FAM18).